The sequence spans 478 residues: Aspartyl/glutamyl-tRNA(Asn/Gln) amidotransferase subunit B (478 aa).

This sequence belongs to the GatB/GatE family. GatB subfamily. As to quaternary structure, heterotrimer of A, B and C subunits.

It catalyses the reaction L-glutamyl-tRNA(Gln) + L-glutamine + ATP + H2O = L-glutaminyl-tRNA(Gln) + L-glutamate + ADP + phosphate + H(+). It carries out the reaction L-aspartyl-tRNA(Asn) + L-glutamine + ATP + H2O = L-asparaginyl-tRNA(Asn) + L-glutamate + ADP + phosphate + 2 H(+). In terms of biological role, allows the formation of correctly charged Asn-tRNA(Asn) or Gln-tRNA(Gln) through the transamidation of misacylated Asp-tRNA(Asn) or Glu-tRNA(Gln) in organisms which lack either or both of asparaginyl-tRNA or glutaminyl-tRNA synthetases. The reaction takes place in the presence of glutamine and ATP through an activated phospho-Asp-tRNA(Asn) or phospho-Glu-tRNA(Gln). The protein is Aspartyl/glutamyl-tRNA(Asn/Gln) amidotransferase subunit B of Pseudothermotoga lettingae (strain ATCC BAA-301 / DSM 14385 / NBRC 107922 / TMO) (Thermotoga lettingae).